Consider the following 595-residue polypeptide: MADANAMEGEKSIPTKIPHWRQVTDPGAVTPEIINYPYPGSGTEADPYLVQWIPSDPRNPMNYSAVKKWSITFVVAIATLAVALISSAYTGGAIEIAQEFHADAEVITLGVSLFVLGFAIGPLIWAPMSELFGRQLLFFGTYLALTAFNAGAAGSPNMATLLVLRFFAGSFGSSPLTNAGGVIADMFPASHRGLAMGIFAIAPFLGPVLGPVIGGFLGESAGWRWVEGFLAIFSGVVWIIGSIFLPETYPPVLLRKRAQRLSKLTGKVYASRMDIEQGKLSIGQAFKTALMRPWILLFREPIVLLLSTYMAIVYGTLYMLFSAFPVVYQQHRGWSPGIGGLAFLGVLGGILAAMVINLLDNKRYAKVSKEYNGFAPPEERLPVAIIGGIAIPIGLFWFAWTNGPQIHWIVSIIASAPFGFGMVLVFLSLMNYLIDAYTIYAASVLAANSVLRSLFGAAFPLFTRYMYQNLGIHWASTIPAFLALACVPFPFLFYIYGANIRKRCKFAGEADAFMQKLMQANSAHLESDLEVSEAGPIPRRNSLEAREVLDRIQSARSGLTRTRTAATVEYEGNPYDIDRVNTGLSRVSTTNSQTR.

Asn-62 carries N-linked (GlcNAc...) asparagine glycosylation. 12 consecutive transmembrane segments (helical) span residues 69–89 (WSIT…SSAY), 106–126 (VITL…LIWA), 136–156 (LLFF…AGSP), 166–186 (FFAG…IADM), 197–217 (GIFA…GGFL), 225–245 (WVEG…SIFL), 301–321 (PIVL…YMLF), 336–356 (PGIG…AMVI), 381–401 (LPVA…FAWT), 409–429 (IVSI…FLSL), 442–462 (ASVL…FPLF), and 478–498 (IPAF…IYGA).

The protein belongs to the major facilitator superfamily. DHA1 family. Polyamines/proton antiporter (TC 2.A.1.2.16) subfamily.

It localises to the cell membrane. MFS-type efflux pump involved in the modulation susceptibility to fluconazole and voriconazole, 2 azoles with similar molecular structure. The polypeptide is MFS-type efflux pump MFS2 (Trichophyton rubrum (strain ATCC MYA-4607 / CBS 118892) (Athlete's foot fungus)).